Here is a 146-residue protein sequence, read N- to C-terminus: Universal stress protein A homolog 2 (146 aa).

Belongs to the universal stress protein A family. As to quaternary structure, homodimer.

The protein localises to the cytoplasm. In terms of biological role, involved in stress response. This chain is Universal stress protein A homolog 2 (uspA2), found in Coxiella burnetii (strain RSA 493 / Nine Mile phase I).